Reading from the N-terminus, the 84-residue chain is Large ribosomal subunit protein bL27 (84 aa).

The interval 1 to 20 (MAHKKAGGSTRNGRDSHSKR) is disordered.

The protein belongs to the bacterial ribosomal protein bL27 family.

In Blochmanniella pennsylvanica (strain BPEN), this protein is Large ribosomal subunit protein bL27.